Consider the following 115-residue polypeptide: MALNWSFRVIFVSTMWCALLKFATLGEPKDDNDYGGGCPFVVLGNGTHAKPAGCSHLCNGAPETLDNIECYNVTEEVAKRMTPGIPYACWLGWCNKGECKRGNRTEVCYRGSEEE.

The N-terminal stretch at 1–26 is a signal peptide; the sequence is MALNWSFRVIFVSTMWCALLKFATLG. Cystine bridges form between Cys-38-Cys-58, Cys-54-Cys-94, Cys-70-Cys-99, and Cys-89-Cys-108. N-linked (GlcNAc...) asparagine glycans are attached at residues Asn-45, Asn-72, and Asn-103.

It localises to the secreted. Salivary chemokine-binding protein which binds to host chemokines CCL2, CCL3, CCL4, CCL8 and CCL18. The polypeptide is Evasin P1182 (Amblyomma maculatum (Gulf Coast tick)).